Consider the following 254-residue polypeptide: Bowman-Birk type bran trypsin inhibitor (254 aa).

An N-terminal signal peptide occupies residues 1-22 (MSNTTMATSTILLFLLAGLAAA). Residues 23 to 118 (HGDGDTTIRL…KCTAALDGLS (96 aa)) constitute a propeptide that is removed on maturation. Repeats lie at residues 46-120 (KPWD…LSME), 121-187 (RPWK…LCTP), and 188-251 (RPWG…CKPR). Intrachain disulfides connect Cys-51–Cys-248, Cys-125–Cys-185, Cys-126–Cys-143, Cys-152–Cys-159, Cys-156–Cys-172, Cys-193–Cys-248, Cys-194–Cys-209, Cys-199–Cys-207, Cys-216–Cys-223, and Cys-220–Cys-236. Positions 252–254 (AEN) are excised as a propeptide.

The protein belongs to the Bowman-Birk serine protease inhibitor family. As to expression, expressed in roots, leaves and flowers.

This Oryza sativa subsp. indica (Rice) protein is Bowman-Birk type bran trypsin inhibitor (RBBI3.3).